Consider the following 167-residue polypeptide: Shikimate kinase (167 aa).

8-15 serves as a coordination point for ATP; it reads GFMGSGKT.

It belongs to the shikimate kinase family.

The protein localises to the cytoplasm. It catalyses the reaction shikimate + ATP = 3-phosphoshikimate + ADP + H(+). Its pathway is metabolic intermediate biosynthesis; chorismate biosynthesis; chorismate from D-erythrose 4-phosphate and phosphoenolpyruvate: step 5/7. This is Shikimate kinase from Helicobacter hepaticus (strain ATCC 51449 / 3B1).